We begin with the raw amino-acid sequence, 190 residues long: uncharacterized protein (190 aa).

Residues 1 to 55 lie on the Cytoplasmic side of the membrane; sequence MSRLRRFNRKILSLSSDYTHDGESDQEDVSILPLDTEEQEELIQKFETNAHITNK. A helical membrane pass occupies residues 56–76; that stretch reads LYINLLSILYLLYGGLLMILV. Residues 77 to 80 lie on the Extracellular side of the membrane; the sequence is RKSR. A helical membrane pass occupies residues 81 to 101; sequence GYIKLALLAGANSLICSCITL. Topologically, residues 102–123 are cytoplasmic; that stretch reads RYDIVNDYLLFKKFKLRVSNFS. A helical membrane pass occupies residues 124–144; it reads INIINIILLVLMAWISFNHVV. Residues 145–149 are Extracellular-facing; that stretch reads EDKKT. Residues 150 to 170 form a helical membrane-spanning segment; it reads VLCLQVPMFLFWVAVLVKRWA. The Cytoplasmic segment spans residues 171 to 190; the sequence is RNIEDEIADLRCLKYKYKNA.

It localises to the membrane. This is an uncharacterized protein from Saccharomyces cerevisiae (strain ATCC 204508 / S288c) (Baker's yeast).